We begin with the raw amino-acid sequence, 196 residues long: Mpv17-like protein (196 aa).

Residues 1-16 (MAGWWPALSRAARRHP) lie on the Cytoplasmic side of the membrane. Positions 16–55 (PWPTNVLLYGSLVSAGDALQQRLQGREANWRQTRRVATLV) are targeting to peroxisomes. Residues 17–34 (WPTNVLLYGSLVSAGDAL) form a helical membrane-spanning segment. Topologically, residues 35-50 (QQRLQGREANWRQTRR) are lumenal. Residues 51 to 67 (VATLVVTFHANFNYVWL) traverse the membrane as a helical segment. Topologically, residues 68–90 (RLLERALPGRAPHALLAKLLCDQ) are cytoplasmic. The helical transmembrane segment at 91–108 (VVGAPIAVSAFYVGMSIL) threads the bilayer. Over 109 to 150 (QGKDDIFLDLKQKFWNTYLSGLMYWPFVQLTNFSLVPVQWRT) the chain is Lumenal. Residues 151–167 (AYAGVCGFLWATFICFS) traverse the membrane as a helical segment. Over 168-196 (QQSGDGTFKSAFTILYTKGTSATEGYPKK) the chain is Cytoplasmic.

This sequence belongs to the peroxisomal membrane protein PXMP2/4 family. Isoform 1 is detected in the kidney (at protein level). Isoform 1 and isoform 2 are expressed in the kidney, heart, liver, lung, pancreas and skeletal muscle.

It is found in the peroxisome membrane. Functionally, participates in reactive oxygen species metabolism by up- or down-regulation of the genes of antioxidant enzymes. Protective against the mitochondrial apoptotic cascade. This chain is Mpv17-like protein (MPV17L), found in Homo sapiens (Human).